A 274-amino-acid chain; its full sequence is 2,3,4,5-tetrahydropyridine-2,6-dicarboxylate N-succinyltransferase (274 aa).

Residues Arg-104 and Asp-141 each coordinate substrate.

It belongs to the transferase hexapeptide repeat family. Homotrimer.

It localises to the cytoplasm. The catalysed reaction is (S)-2,3,4,5-tetrahydrodipicolinate + succinyl-CoA + H2O = (S)-2-succinylamino-6-oxoheptanedioate + CoA. Its pathway is amino-acid biosynthesis; L-lysine biosynthesis via DAP pathway; LL-2,6-diaminopimelate from (S)-tetrahydrodipicolinate (succinylase route): step 1/3. This chain is 2,3,4,5-tetrahydropyridine-2,6-dicarboxylate N-succinyltransferase, found in Citrobacter koseri (strain ATCC BAA-895 / CDC 4225-83 / SGSC4696).